The sequence spans 717 residues: Amino-acid acetyltransferase, mitochondrial (717 aa).

The N-terminal 23 residues, 1–23 (MFIWTKAPARGLGKASKILPKRD), are a transit peptide targeting the mitochondrion. Positions 35–70 (KQFHTATTSVRRSSSSAKERQRAERQQLTRLLKESP) are disordered. Over residues 39 to 50 (TATTSVRRSSSS) the composition is skewed to low complexity. Residues 51 to 70 (AKERQRAERQQLTRLLKESP) show a composition bias toward basic and acidic residues. The 174-residue stretch at 518–691 (NPSIELADDP…GDVDDAKKRD (174 aa)) folds into the N-acetyltransferase domain.

The protein belongs to the acetyltransferase family.

Its subcellular location is the mitochondrion. The catalysed reaction is L-glutamate + acetyl-CoA = N-acetyl-L-glutamate + CoA + H(+). It participates in amino-acid biosynthesis; L-arginine biosynthesis; N(2)-acetyl-L-ornithine from L-glutamate: step 1/4. Its function is as follows. N-acetylglutamate synthase involved in arginine biosynthesis. This Pyrenophora tritici-repentis (strain Pt-1C-BFP) (Wheat tan spot fungus) protein is Amino-acid acetyltransferase, mitochondrial (arg2).